The primary structure comprises 435 residues: uncharacterized protein (435 aa).

Helical transmembrane passes span 14–34 (VSMA…GVGA), 44–64 (TFIL…KLGA), 84–104 (IITG…IALF), 123–143 (FNIA…NFFG), 153–173 (FIVL…LITI), 187–207 (VSGM…FGVI), 224–244 (AIFI…ISAI), 267–287 (FLGN…ISSA), 324–344 (LYIT…EGVA), 346–366 (ITSA…YILI), 375–395 (IVIF…YYQW), and 400–420 (FVFY…IIYR).

The protein localises to the cell membrane. This is an uncharacterized protein from Methanocaldococcus jannaschii (strain ATCC 43067 / DSM 2661 / JAL-1 / JCM 10045 / NBRC 100440) (Methanococcus jannaschii).